The sequence spans 623 residues: Kelch repeat and BTB domain-containing protein 2 (623 aa).

The region spanning 31 to 98 (TDIVLIVEGT…AYTGNLAMND (68 aa)) is the BTB domain. Residues 133–229 (CVRLLSFADL…IRIDALSEVT (97 aa)) enclose the BACK domain. Serine 300 carries the post-translational modification Phosphoserine. Kelch repeat units lie at residues 317 to 380 (DIYI…CCEG), 381 to 429 (YIYA…VVHD), 431 to 469 (IYVM…AFGD), 470 to 529 (KIFY…RAVV), and 535 to 581 (CVFM…DFRC).

Component of the BCR(KBTBD2) E3 ubiquitin ligase complex, at least composed of CUL3, KBTBD2 and RBX1. Interacts (via the BTB domain) with CUL3.

It participates in protein modification; protein ubiquitination. Its function is as follows. Substrate-specific adapter of a BCR (BTB-CUL3-RBX1) E3 ubiquitin ligase complex that acts as a regulator of the insulin signaling pathway, modulating insulin sensitivity by limiting PIK3R1/p85alpha abundance in adipocytes. Targets PIK3R1, the regulatory subunit of phosphatidylinositol 3-kinase (PI3K), for 'Lys-48'-linked polyubiquitination and proteasome-mediated degradation. The sequence is that of Kelch repeat and BTB domain-containing protein 2 from Homo sapiens (Human).